The chain runs to 258 residues: Chaperone protein FaeE (258 aa).

A signal peptide spans Met1–Ala34. The interval Lys239–Lys258 is disordered. The segment covering Ala247–Lys258 has biased composition (basic and acidic residues).

This sequence belongs to the periplasmic pilus chaperone family.

It localises to the periplasm. Its function is as follows. Mediates assembly of pili by forming soluble multimeric complexes with pili subunits as an intermediate step in the assembly process. This protein is involved in K88 pili assembly. Protects pilin protein from proteolytic degradation by DegP and from premature polymerization. This Escherichia coli protein is Chaperone protein FaeE (faeE).